Consider the following 92-residue polypeptide: MICAVYKSSRKQETYLFVPKRDDFSQVPEPLLQMFGTPLLVMLLPLDRKEKLGIADIDKVRSELAQKGYYLQLPPPKDNLLTQHRRDLGIED.

Residues Met-1–Arg-85 form the YcgL domain.

This Shewanella amazonensis (strain ATCC BAA-1098 / SB2B) protein is YcgL domain-containing protein Sama_1929.